A 299-amino-acid polypeptide reads, in one-letter code: Oxygen-dependent coproporphyrinogen-III oxidase (299 aa).

Residue Ser-92 coordinates substrate. Positions 96 and 106 each coordinate a divalent metal cation. His-106 serves as the catalytic Proton donor. Position 108–110 (108–110) interacts with substrate; it reads NVR. Positions 145 and 175 each coordinate a divalent metal cation. The important for dimerization stretch occupies residues 240 to 275; it reads YVEFNLVWDRGTLFGLQTGGRTESILMSMPPLVRWE. A substrate-binding site is contributed by 258 to 260; the sequence is GGR.

The protein belongs to the aerobic coproporphyrinogen-III oxidase family. In terms of assembly, homodimer. A divalent metal cation serves as cofactor.

The protein resides in the cytoplasm. The catalysed reaction is coproporphyrinogen III + O2 + 2 H(+) = protoporphyrinogen IX + 2 CO2 + 2 H2O. It participates in porphyrin-containing compound metabolism; protoporphyrin-IX biosynthesis; protoporphyrinogen-IX from coproporphyrinogen-III (O2 route): step 1/1. Involved in the heme biosynthesis. Catalyzes the aerobic oxidative decarboxylation of propionate groups of rings A and B of coproporphyrinogen-III to yield the vinyl groups in protoporphyrinogen-IX. The sequence is that of Oxygen-dependent coproporphyrinogen-III oxidase from Shigella flexneri.